The sequence spans 393 residues: MASKENIADNMEKFSLKSPSKKILTDSTNNVRKMSIGHEANGQLAKESSTVNGIGKSANSLMEKSVTPFDPSLEPLLRENPRRFVIFPIQYHDIWQMYKKAEASFWTVEEVDLSKDLTDWHRLKDDERHFISHVLAFFAASDGIVNENLVERFSQEVQITEARCFYGFQIAMENVHSEMYSVLIDTYIRDPHQREYLFNAIETMPAVKRKADWALSWISSKSANFGERIIAFAAVEGIFFSGSFASIFWLKKRGLMPGLTFSNELISRDEGLHCDFAVLMFQHLVQRPKRERIIEIIRDAVAIEQEFLTDALPVNLIGMNCDLMSQYIEFVADRLLVELGVGKIYNTKNPFNFMEMISLDGKTNFFEKKVGEYQRMGVVSNPLDNVFTLDADF.

At S18 the chain carries Phosphoserine. Positions 142, 173, and 176 each coordinate Fe cation. Y180 is a catalytic residue. Fe cation-binding residues include E236, E270, and H273.

It belongs to the ribonucleoside diphosphate reductase small chain family. As to quaternary structure, heterodimer of a large and a small subunit. It depends on Fe cation as a cofactor.

It localises to the cytoplasm. The enzyme catalyses a 2'-deoxyribonucleoside 5'-diphosphate + [thioredoxin]-disulfide + H2O = a ribonucleoside 5'-diphosphate + [thioredoxin]-dithiol. Functionally, provides the precursors necessary for DNA synthesis. Catalyzes the biosynthesis of deoxyribonucleotides from the corresponding ribonucleotides. This Drosophila melanogaster (Fruit fly) protein is Ribonucleoside-diphosphate reductase subunit M2 (RnrS).